The sequence spans 287 residues: MLARFPLYLRLVRMDKPIGSLLLLWPTLNALWIASDGRPRWPLLVIFTLGTLLMRSAGCAMNDYADRDFDRHVKRTADRPLTSGKIRAWEAVAIAVGLSFIAFLLILPLNTLTKELSVVALFVAGSYPFMKRFFAIPQAYLGIAFGFGIPMAFAAVQDTVPMLAWVMLVANIFWSVAYDTEYAMVDRDDDIKIGIRTSALTFGRFDVAAVMACYAATLGIYVWIGVTLGFGLAYWVGWAAAVGCALYHYTLIKDRERMPCFAAFRHNNWLGGVLFAGIAAHYLLAGN.

The next 6 membrane-spanning stretches (helical) occupy residues 41-61 (WPLL…GCAM), 89-109 (WEAV…ILPL), 133-153 (FFAI…PMAF), 158-178 (DTVP…SVAY), 202-224 (FGRF…YVWI), and 266-286 (HNNW…LLAG).

This sequence belongs to the UbiA prenyltransferase family. Mg(2+) serves as cofactor.

The protein localises to the cell inner membrane. It carries out the reaction all-trans-octaprenyl diphosphate + 4-hydroxybenzoate = 4-hydroxy-3-(all-trans-octaprenyl)benzoate + diphosphate. Its pathway is cofactor biosynthesis; ubiquinone biosynthesis. In terms of biological role, catalyzes the prenylation of para-hydroxybenzoate (PHB) with an all-trans polyprenyl group. Mediates the second step in the final reaction sequence of ubiquinone-8 (UQ-8) biosynthesis, which is the condensation of the polyisoprenoid side chain with PHB, generating the first membrane-bound Q intermediate 3-octaprenyl-4-hydroxybenzoate. This Burkholderia cenocepacia (strain HI2424) protein is 4-hydroxybenzoate octaprenyltransferase.